Reading from the N-terminus, the 283-residue chain is BTB/POZ domain-containing protein KCTD15 (283 aa).

The interval 1-33 is disordered; sequence MPHRKERPSGSSLNAHGSSGTAEGGNMSRLSLT. Over residues 9-21 the composition is skewed to polar residues; the sequence is SGSSLNAHGSSGT. Phosphoserine occurs at positions 31, 35, and 38. A BTB domain is found at 56–126; that stretch reads APVHIDVGGH…LRTSKLLLPD (71 aa).

In terms of assembly, forms oligomers, predominantly homopentamers. Interacts with KCTD1, probably forming heteropentamers depending on its abundance in a cell-type dependent manner. Interacts with TFAP2A; this interaction inhibits TFAP2A transcriptional activation. In terms of tissue distribution, expressed in the cerebral cortex, cerebellum, and hypothalamus (at protein level). Expressed in the arcuate hypothalamic nucleus, the ventromedial hypothalamic nucleus and the accumbens nucleus of the ventral striatum.

Its subcellular location is the nucleus. Functionally, during embryonic development, interferes with neural crest formation. Inhibits AP2 transcriptional activity by interaction with its activation domain. The sequence is that of BTB/POZ domain-containing protein KCTD15 (Kctd15) from Mus musculus (Mouse).